The primary structure comprises 375 residues: Dual-specificity RNA methyltransferase RlmN (375 aa).

Glu98 functions as the Proton acceptor in the catalytic mechanism. The Radical SAM core domain occupies 106 to 346; the sequence is GGKRRTLCVS…VRTTRGDDID (241 aa). A disulfide bridge links Cys113 with Cys349. [4Fe-4S] cluster-binding residues include Cys120, Cys124, and Cys127. S-adenosyl-L-methionine-binding positions include 174 to 175, Ser206, 228 to 230, and Asn306; these read GE and SLH. The active-site S-methylcysteine intermediate is the Cys349.

Belongs to the radical SAM superfamily. RlmN family. [4Fe-4S] cluster serves as cofactor.

It is found in the cytoplasm. It carries out the reaction adenosine(2503) in 23S rRNA + 2 reduced [2Fe-2S]-[ferredoxin] + 2 S-adenosyl-L-methionine = 2-methyladenosine(2503) in 23S rRNA + 5'-deoxyadenosine + L-methionine + 2 oxidized [2Fe-2S]-[ferredoxin] + S-adenosyl-L-homocysteine. The catalysed reaction is adenosine(37) in tRNA + 2 reduced [2Fe-2S]-[ferredoxin] + 2 S-adenosyl-L-methionine = 2-methyladenosine(37) in tRNA + 5'-deoxyadenosine + L-methionine + 2 oxidized [2Fe-2S]-[ferredoxin] + S-adenosyl-L-homocysteine. Specifically methylates position 2 of adenine 2503 in 23S rRNA and position 2 of adenine 37 in tRNAs. m2A2503 modification seems to play a crucial role in the proofreading step occurring at the peptidyl transferase center and thus would serve to optimize ribosomal fidelity. This chain is Dual-specificity RNA methyltransferase RlmN, found in Chromohalobacter salexigens (strain ATCC BAA-138 / DSM 3043 / CIP 106854 / NCIMB 13768 / 1H11).